The following is a 421-amino-acid chain: Calreticulin (421 aa).

The signal sequence occupies residues 1 to 22 (MAFRVPNSSLLSLILLSLLAIA). The N-linked (GlcNAc...) asparagine glycan is linked to Asn56. A disulfide bond links Cys110 and Cys142. Tyr114, Lys116, Tyr133, and Asp140 together coordinate an alpha-D-glucoside. Asn156 is a glycosylation site (N-linked (GlcNAc...) asparagine). Tandem repeats lie at residues 196–207 (KQTGSLYSDWDL), 215–226 (DPEAKKPEDWED), 232–243 (DPEDKKPEGYDD), 250–261 (DPDAKKPEDWDD), 265–275 (GEWTAPTIPNP), 279–289 (GEWKPKKIKNP), and 293–303 (GKWKAPLIDNP). Positions 196–261 (KQTGSLYSDW…DAKKPEDWDD (66 aa)) are 4 X approximate repeats. The tract at residues 217–283 (EAKKPEDWED…NPEYKGEWKP (67 aa)) is disordered. Acidic residues predominate over residues 223–232 (DWEDQEYIPD). Positions 233–257 (PEDKKPEGYDDIPKEITDPDAKKPE) are enriched in basic and acidic residues. The tract at residues 265 to 303 (GEWTAPTIPNPEYKGEWKPKKIKNPNFKGKWKAPLIDNP) is 3 X approximate repeats. An an alpha-D-glucoside-binding site is contributed by Glu323. Positions 350 to 380 (EETWGKQKDAEKAAFEELEKKLQEEESKEDP) are enriched in basic and acidic residues. Residues 350 to 421 (EETWGKQKDA…ETEAEKHDEL (72 aa)) are disordered. Residues 381 to 399 (VDSDAEDDDNEAEDGEESD) are compositionally biased toward acidic residues. The short motif at 418–421 (HDEL) is the Prevents secretion from ER element.

The protein belongs to the calreticulin family.

Its subcellular location is the endoplasmic reticulum lumen. Functionally, molecular calcium-binding chaperone promoting folding, oligomeric assembly and quality control in the ER via the calreticulin/calnexin cycle. This lectin may interact transiently with almost all of the monoglucosylated glycoproteins that are synthesized in the ER. The protein is Calreticulin of Prunus armeniaca (Apricot).